The sequence spans 133 residues: Small ribosomal subunit protein uS11 (133 aa).

This sequence belongs to the universal ribosomal protein uS11 family. As to quaternary structure, part of the 30S ribosomal subunit.

Located on the platform of the 30S subunit. This is Small ribosomal subunit protein uS11 from Pyrobaculum aerophilum (strain ATCC 51768 / DSM 7523 / JCM 9630 / CIP 104966 / NBRC 100827 / IM2).